Here is a 725-residue protein sequence, read N- to C-terminus: Probable dipeptidyl-peptidase 5 (725 aa).

An N-terminal signal peptide occupies residues 1–18 (MGALRWLSIAATASTALA). N-linked (GlcNAc...) asparagine glycosylation is found at Asn75, Asn96, Asn153, Asn258, Asn383, and Asn453. Ser563 serves as the catalytic Charge relay system. N-linked (GlcNAc...) asparagine glycosylation is present at Asn610. Residues Asp646 and His678 each act as charge relay system in the active site.

Belongs to the peptidase S9C family.

It is found in the secreted. In terms of biological role, extracellular dipeptidyl-peptidase which removes N-terminal dipeptides sequentially from polypeptides having unsubstituted N-termini. The chain is Probable dipeptidyl-peptidase 5 (dpp5) from Aspergillus flavus (strain ATCC 200026 / FGSC A1120 / IAM 13836 / NRRL 3357 / JCM 12722 / SRRC 167).